The chain runs to 124 residues: Small ribosomal subunit protein uS13 (124 aa).

Residues 98–124 are disordered; sequence VRGQRTRCNARTRKGPRKTVGAKRKEK.

The protein belongs to the universal ribosomal protein uS13 family. As to quaternary structure, part of the 30S ribosomal subunit. Forms a loose heterodimer with protein S19. Forms two bridges to the 50S subunit in the 70S ribosome.

In terms of biological role, located at the top of the head of the 30S subunit, it contacts several helices of the 16S rRNA. In the 70S ribosome it contacts the 23S rRNA (bridge B1a) and protein L5 of the 50S subunit (bridge B1b), connecting the 2 subunits; these bridges are implicated in subunit movement. Contacts the tRNAs in the A and P-sites. The polypeptide is Small ribosomal subunit protein uS13 (Dictyoglomus thermophilum (strain ATCC 35947 / DSM 3960 / H-6-12)).